Here is a 118-residue protein sequence, read N- to C-terminus: MARIAGINIPDQKHAVIALTAIYGIGKTRAKAICAAAGIAEDVKIRELSEEQIDKLRDEVGKFTVEGDLRREVTLNIKRLLDLGCYRGLRHRRGLPVRGQRTKTNARTRKGPRKPIKK.

Positions Gly94 to Lys118 are disordered.

Belongs to the universal ribosomal protein uS13 family. Part of the 30S ribosomal subunit. Forms a loose heterodimer with protein S19. Forms two bridges to the 50S subunit in the 70S ribosome.

Its function is as follows. Located at the top of the head of the 30S subunit, it contacts several helices of the 16S rRNA. In the 70S ribosome it contacts the 23S rRNA (bridge B1a) and protein L5 of the 50S subunit (bridge B1b), connecting the 2 subunits; these bridges are implicated in subunit movement. Contacts the tRNAs in the A and P-sites. The sequence is that of Small ribosomal subunit protein uS13 from Histophilus somni (strain 129Pt) (Haemophilus somnus).